Here is a 465-residue protein sequence, read N- to C-terminus: tRNA-2-methylthio-N(6)-dimethylallyladenosine synthase (465 aa).

The MTTase N-terminal domain maps to 26–141 (MRAHIITYGC…LPEALKANER (116 aa)). [4Fe-4S] cluster is bound by residues Cys-35, Cys-71, Cys-104, Cys-173, Cys-177, and Cys-180. Positions 159–388 (PKGALSAHVT…IEKQKEWSYR (230 aa)) constitute a Radical SAM core domain. Residues 391–453 (LEWVGKTVEV…PHLLFGEVVG (63 aa)) enclose the TRAM domain.

Belongs to the methylthiotransferase family. MiaB subfamily. As to quaternary structure, monomer. Requires [4Fe-4S] cluster as cofactor.

It localises to the cytoplasm. The enzyme catalyses N(6)-dimethylallyladenosine(37) in tRNA + (sulfur carrier)-SH + AH2 + 2 S-adenosyl-L-methionine = 2-methylsulfanyl-N(6)-dimethylallyladenosine(37) in tRNA + (sulfur carrier)-H + 5'-deoxyadenosine + L-methionine + A + S-adenosyl-L-homocysteine + 2 H(+). In terms of biological role, catalyzes the methylthiolation of N6-(dimethylallyl)adenosine (i(6)A), leading to the formation of 2-methylthio-N6-(dimethylallyl)adenosine (ms(2)i(6)A) at position 37 in tRNAs that read codons beginning with uridine. The sequence is that of tRNA-2-methylthio-N(6)-dimethylallyladenosine synthase from Thermus thermophilus (strain ATCC 27634 / DSM 579 / HB8).